The following is a 333-amino-acid chain: Fructose-1,6-bisphosphatase class 1 1 (333 aa).

Mg(2+)-binding residues include E81, D100, L102, and D103. Residues 103–106 and N191 contribute to the substrate site; that span reads DGSS. Position 263 (E263) interacts with Mg(2+).

The protein belongs to the FBPase class 1 family. As to quaternary structure, homotetramer. Requires Mg(2+) as cofactor.

It is found in the cytoplasm. The enzyme catalyses beta-D-fructose 1,6-bisphosphate + H2O = beta-D-fructose 6-phosphate + phosphate. Its pathway is carbohydrate biosynthesis; Calvin cycle. This Cereibacter sphaeroides (strain ATCC 17029 / ATH 2.4.9) (Rhodobacter sphaeroides) protein is Fructose-1,6-bisphosphatase class 1 1.